Reading from the N-terminus, the 324-residue chain is Beta-ketoacyl-[acyl-carrier-protein] synthase III (324 aa).

Catalysis depends on residues C116 and H251. An ACP-binding region spans residues 252–256; it reads QANLR. N281 is a catalytic residue.

It belongs to the thiolase-like superfamily. FabH family. As to quaternary structure, homodimer.

The protein localises to the cytoplasm. It carries out the reaction malonyl-[ACP] + acetyl-CoA + H(+) = 3-oxobutanoyl-[ACP] + CO2 + CoA. The protein operates within lipid metabolism; fatty acid biosynthesis. Catalyzes the condensation reaction of fatty acid synthesis by the addition to an acyl acceptor of two carbons from malonyl-ACP. Catalyzes the first condensation reaction which initiates fatty acid synthesis and may therefore play a role in governing the total rate of fatty acid production. Possesses both acetoacetyl-ACP synthase and acetyl transacylase activities. Its substrate specificity determines the biosynthesis of branched-chain and/or straight-chain of fatty acids. The protein is Beta-ketoacyl-[acyl-carrier-protein] synthase III of Xylella fastidiosa (strain Temecula1 / ATCC 700964).